Consider the following 90-residue polypeptide: MSSTSQKHKDFVAEPMGEKSVMALAGIGEVLGKRLEEKGFDKAYVVLGQFLVLRKDEELFREWLKDTCGANTKQQGDCYSCLREWCDSFL.

Phosphoserine is present on residues Ser-2 and Ser-3. A Phosphothreonine modification is found at Thr-4. Ser-5 bears the Phosphoserine mark.

This sequence belongs to the BAF family. As to quaternary structure, homodimer.

The protein localises to the nucleus. Its subcellular location is the chromosome. The protein resides in the nucleus envelope. It is found in the cytoplasm. In terms of biological role, non-specific DNA-binding protein that plays key roles in mitotic nuclear reassembly, chromatin organization, DNA damage response, gene expression and intrinsic immunity against foreign DNA. Contains two non-specific double-stranded DNA (dsDNA)-binding sites which promote DNA cross-bridging. Plays a key role in nuclear membrane reformation at the end of mitosis by driving formation of a single nucleus in a spindle-independent manner. Transiently cross-bridges anaphase chromosomes via its ability to bridge distant DNA sites, leading to the formation of a dense chromatin network at the chromosome ensemble surface that limits membranes to the surface. Also acts as a negative regulator of innate immune activation by restricting CGAS activity toward self-DNA upon acute loss of nuclear membrane integrity. Outcompetes CGAS for DNA-binding, thereby preventing CGAS activation and subsequent damaging autoinflammatory responses. Also involved in DNA damage response; acts by inhibiting the ADP-ribosyltransferase activity of PARP1. Involved in the recognition of exogenous dsDNA in the cytosol: associates with exogenous dsDNA immediately after its appearance in the cytosol at endosome breakdown and is required to avoid autophagy. This chain is Barrier-to-autointegration factor (banf1), found in Danio rerio (Zebrafish).